A 485-amino-acid chain; its full sequence is Protein LAZ1 (485 aa).

Residues 1–19 (MDILKSYHLLAAAYSAPAW) lie on the Cytoplasmic side of the membrane. The chain crosses the membrane as a helical span at residues 20–40 (ASFMAGAFLVLTLSLSLFLVF). The Lumenal segment spans residues 41 to 53 (DHLSTYKNPEEQK). Residues 54-74 (FLIGVILMVPCYSIESFASLV) form a helical membrane-spanning segment. Topologically, residues 75–167 (KPSISVDCGI…QVVKFGIVQY (93 aa)) are cytoplasmic. Residues 168–188 (MIIKSLTALTALILEAFGVYC) form a helical membrane-spanning segment. The Lumenal segment spans residues 189–196 (EGEFKWGC). Residues 197-217 (GYPYLAVVLNFSQSWALYCLV) form a helical membrane-spanning segment. Residues 218 to 241 (QFYGATKDELAHIQPLAKFLTFKS) are Cytoplasmic-facing. Residues 242–262 (IVFLTWWQGVAIALLSSLGLF) form a helical membrane-spanning segment. Over 263 to 277 (KSSIAQSLQLKTSVQ) the chain is Lumenal. The helical transmembrane segment at 278 to 298 (DFIICIEMGIASVVHLYVFPA) threads the bilayer. Topologically, residues 299–485 (KPYGLMGDRF…VRGRRWITKD (187 aa)) are cytoplasmic. The stretch at 384–415 (MEKSITKFNEKLHKISQNIKKHDKEKRRVKDD) forms a coiled coil. A disordered region spans residues 400-485 (QNIKKHDKEK…VRGRRWITKD (86 aa)). A compositionally biased stretch (basic and acidic residues) spans 403-416 (KKHDKEKRRVKDDS). A compositionally biased stretch (polar residues) spans 455–469 (GYTSAESGGESSSDQ). A compositionally biased stretch (basic and acidic residues) spans 476–485 (VRGRRWITKD).

Belongs to the TMEM184 family.

The protein resides in the endomembrane system. It localises to the cell membrane. Its subcellular location is the cytoplasm. It is found in the cytosol. Functionally, required for programmed cell death (PCD) associated with hypersensitive response (HR). Involved both in the induction of EDS1/PAD4 mediated HR and in accelerated cell death in the acd11 mutant. Not required for HR induction elicited through pathways exclusively dependent on CC-NB-LRR resistance proteins. This chain is Protein LAZ1, found in Arabidopsis thaliana (Mouse-ear cress).